Consider the following 872-residue polypeptide: DNA mismatch repair protein MutS (872 aa).

Residue 622 to 629 coordinates ATP; that stretch reads GPNMAGKS.

The protein belongs to the DNA mismatch repair MutS family.

In terms of biological role, this protein is involved in the repair of mismatches in DNA. It is possible that it carries out the mismatch recognition step. This protein has a weak ATPase activity. The polypeptide is DNA mismatch repair protein MutS (Geobacter metallireducens (strain ATCC 53774 / DSM 7210 / GS-15)).